Reading from the N-terminus, the 416-residue chain is Nonsense-mediated decay protein 4 (416 aa).

3 disordered regions span residues 1–21, 195–218, and 356–393; these read MSLYPYNSDEDEARKNSNYHD, QHPIPQGESLESHNSFDETNYNNS, and DRPSKSKNKNKNKNTKKSTKPKQINGVVSDGCTGANGD. A compositionally biased stretch (basic and acidic residues) spans 12-21; that stretch reads EARKNSNYHD. Basic residues predominate over residues 360-375; the sequence is KSKNKNKNKNTKKSTK.

Its subcellular location is the cytoplasm. Involved in nonsense-mediated decay of mRNAs containing premature stop codons. The protein is Nonsense-mediated decay protein 4 (NMD4) of Debaryomyces hansenii (strain ATCC 36239 / CBS 767 / BCRC 21394 / JCM 1990 / NBRC 0083 / IGC 2968) (Yeast).